Reading from the N-terminus, the 570-residue chain is Protein HEATR9 (570 aa).

The polypeptide is Protein HEATR9 (HEATR9) (Macaca fascicularis (Crab-eating macaque)).